Reading from the N-terminus, the 152-residue chain is MTSTLNTLKSNSGSRKKKLRKGRGIAAGQGASCGFGMRGQKSRSGRPTRPGFEGGQMPLYRRVPKLKHFEIINQKNFSIINLEKLNDFKDNDTVNLDSLVKKGLIFKPKFPLKILGNGKLNVKLKVQAHAFTKVAKQKIEDAGGSCELINNK.

Residues 1–57 (MTSTLNTLKSNSGSRKKKLRKGRGIAAGQGASCGFGMRGQKSRSGRPTRPGFEGGQM) form a disordered region. Residues 14–23 (SRKKKLRKGR) are compositionally biased toward basic residues. Positions 25–37 (IAAGQGASCGFGM) are enriched in gly residues.

Belongs to the universal ribosomal protein uL15 family. Part of the 50S ribosomal subunit.

In terms of biological role, binds to the 23S rRNA. The chain is Large ribosomal subunit protein uL15 from Prochlorococcus marinus (strain MIT 9301).